A 179-amino-acid polypeptide reads, in one-letter code: Putative undecaprenyl-phosphate N-acetylgalactosaminyl 1-phosphate transferase (179 aa).

Residues 39-59 form a helical membrane-spanning segment; it reads IWFALIGLAIALPMIAVFSIL.

Belongs to the bacterial sugar transferase family.

It localises to the cell membrane. The catalysed reaction is di-trans,octa-cis-undecaprenyl phosphate + UDP-N-acetyl-alpha-D-galactosamine = N-acetyl-alpha-D-galactosaminyl-di-trans,octa-cis-undecaprenyl diphosphate + UMP. The protein operates within cell wall biogenesis; teichuronic acid biosynthesis. Might mediate the very first reaction in teichuronic synthesis, i.e. the formation of lipid-linked N-acetylglucosamine. This is Putative undecaprenyl-phosphate N-acetylgalactosaminyl 1-phosphate transferase (tuaA) from Bacillus subtilis (strain 168).